Reading from the N-terminus, the 139-residue chain is Putative pre-16S rRNA nuclease (139 aa).

It belongs to the YqgF nuclease family.

The protein localises to the cytoplasm. Its function is as follows. Could be a nuclease involved in processing of the 5'-end of pre-16S rRNA. The polypeptide is Putative pre-16S rRNA nuclease (Streptococcus thermophilus (strain ATCC BAA-491 / LMD-9)).